We begin with the raw amino-acid sequence, 143 residues long: Nucleoside diphosphate kinase (143 aa).

Positions 11, 59, 87, 93, 104, and 114 each coordinate ATP. His-117 functions as the Pros-phosphohistidine intermediate in the catalytic mechanism.

It belongs to the NDK family. Homotetramer. The cofactor is Mg(2+).

The protein localises to the cytoplasm. The enzyme catalyses a 2'-deoxyribonucleoside 5'-diphosphate + ATP = a 2'-deoxyribonucleoside 5'-triphosphate + ADP. The catalysed reaction is a ribonucleoside 5'-diphosphate + ATP = a ribonucleoside 5'-triphosphate + ADP. Functionally, major role in the synthesis of nucleoside triphosphates other than ATP. The ATP gamma phosphate is transferred to the NDP beta phosphate via a ping-pong mechanism, using a phosphorylated active-site intermediate. The protein is Nucleoside diphosphate kinase of Clostridium perfringens (strain SM101 / Type A).